Reading from the N-terminus, the 712-residue chain is MENLGVGEGAEACSRLSRSRGRHSMTRAPKHLWRQPRRPIRIQQRFYSDPDKSAGCRERDLSPRPELRKSRLSWPVSSCRRFDLENGLSCGRRALDPQSSPGLGRIMQAPVPHSQRRESFLYRSDSDYELSPKAMSRNSSVASDLHGEDMIVTPFAQVLASLRTVRSNVAALARQQCLGAAKQGPVGNPSSSNQLPPAEDTGQKLALETLDELDWCLDQLETLQTRHSVGEMASNKFKRILNRELTHLSETSRSGNQVSEYISRTFLDQQTEVELPKVTAEEAPQPMSRISGLHGLCHSASLSSATVPRFGVQTDQEEQLAKELEDTNKWGLDVFKVAELSGNRPLTAIIFSIFQERDLLKTFQIPADTLATYLLMLEGHYHANVAYHNSLHAADVAQSTHVLLATPALEAVFTDLEILAALFASAIHDVDHPGVSNQFLINTNSELALMYNDASVLENHHLAVGFKLLQAENCDIFQNLSAKQRLSLRRMVIDMVLATDMSKHMNLLADLKTMVETKKVTSLGVLLLDNYSDRIQVLQNLVHCADLSNPTKPLPLYRQWTDRIMAEFFQQGDRERESGLDISPMCDKHTASVEKSQVGFIDYIAHPLWETWADLVHPDAQDLLDTLEDNREWYQSKIPRSPSDLTNPERDGPDRFQFELTLEEAEEEDEEEEEEGEETALAKEALELPDTELLSPEAGPDPGDLPLDNQRT.

2 disordered regions span residues 1–31 (MENLGVGEGAEACSRLSRSRGRHSMTRAPKH) and 45–64 (RFYSDPDKSAGCRERDLSPR). Residues 17–31 (SRSRGRHSMTRAPKH) are compositionally biased toward basic residues. The segment covering 48-64 (SDPDKSAGCRERDLSPR) has biased composition (basic and acidic residues). Position 73 is a phosphoserine (S73). The segment at 181-200 (AKQGPVGNPSSSNQLPPAED) is disordered. One can recognise a PDEase domain in the interval 312–641 (VQTDQEEQLA…EWYQSKIPRS (330 aa)). The active-site Proton donor is the H388. H388 contacts 3',5'-cyclic AMP. AMP-binding residues include H388 and H392. Zn(2+)-binding residues include H392, H428, D429, and D546. Residues D429, D546, Q597, and F600 each contribute to the AMP site. D429 is a binding site for Mg(2+). Position 429 (D429) interacts with Mn(2+). Q597 and F600 together coordinate 3',5'-cyclic AMP. Disordered regions lie at residues 636 to 655 (SKIPRSPSDLTNPERDGPDR) and 664 to 712 (EAEE…NQRT). Phosphoserine is present on S641. Over residues 664–678 (EAEEEDEEEEEEGEE) the composition is skewed to acidic residues.

The protein belongs to the cyclic nucleotide phosphodiesterase family. PDE4 subfamily. As to quaternary structure, part of a complex containing AKAP5, ADCY5, ADCY6 and PKD2. It depends on Zn(2+) as a cofactor. Requires Mg(2+) as cofactor. Mn(2+) is required as a cofactor. As to expression, expressed in various tissues but not in cells of the immune system.

Its subcellular location is the cell projection. It is found in the cilium. The enzyme catalyses 3',5'-cyclic AMP + H2O = AMP + H(+). It functions in the pathway purine metabolism; 3',5'-cyclic AMP degradation; AMP from 3',5'-cyclic AMP: step 1/1. Its activity is regulated as follows. Inhibited by rolipram. Its function is as follows. Hydrolyzes the second messenger cAMP, which is a key regulator of many important physiological processes. The sequence is that of 3',5'-cyclic-AMP phosphodiesterase 4C from Homo sapiens (Human).